We begin with the raw amino-acid sequence, 543 residues long: Membrane protein insertase YidC (543 aa).

A helical transmembrane segment spans residues 7 to 27 (FLLIGLAMVSFLLWQQWQVDY). Residues 30–61 (QPAQPVESQQTTGSDAPNSNGDVPIATPTNKS) form a disordered region. The segment covering 35-61 (VESQQTTGSDAPNSNGDVPIATPTNKS) has biased composition (polar residues). A run of 4 helical transmembrane segments spans residues 341–361 (FAFL…IILI), 421–441 (GGCF…WVLL), 451–471 (FIFW…PILT), and 499–519 (PVAM…YWLI).

It belongs to the OXA1/ALB3/YidC family. Type 1 subfamily. Interacts with the Sec translocase complex via SecD. Specifically interacts with transmembrane segments of nascent integral membrane proteins during membrane integration.

Its subcellular location is the cell inner membrane. Functionally, required for the insertion and/or proper folding and/or complex formation of integral membrane proteins into the membrane. Involved in integration of membrane proteins that insert both dependently and independently of the Sec translocase complex, as well as at least some lipoproteins. Aids folding of multispanning membrane proteins. In Pseudoalteromonas atlantica (strain T6c / ATCC BAA-1087), this protein is Membrane protein insertase YidC.